The sequence spans 333 residues: Probable G-protein coupled receptor 33 (333 aa).

The Extracellular portion of the chain corresponds to 1 to 30 (MDLINSTDYLINASTLVRNSTQFLAPASKM). Residues N5, N12, and N19 are each glycosylated (N-linked (GlcNAc...) asparagine). Residues 31–53 (IIALSLYISSIIGTITNGLYLWV) traverse the membrane as a helical segment. Residues 54–64 (LRFKMKQTVNT) lie on the Cytoplasmic side of the membrane. Residues 65–86 (LLFFHLILSYFISTMILPFMAT) form a helical membrane-spanning segment. Over 87-103 (SQLQDNHWNFGTALCKV) the chain is Extracellular. A disulfide bridge connects residues C101 and C179. A helical membrane pass occupies residues 104 to 124 (FNGTLSLGMFTSVFFLSAIGL). At 125–143 (DRYLLTLHPVWSQQHRTPR) the chain is on the cytoplasmic side. The chain crosses the membrane as a helical span at residues 144–165 (WASSIVLGVWISAAALSIPYLI). Over 166-209 (FRETHHDRKGKVTCQNNYAVSTNWESKEMQASRQWIHVACFISR) the chain is Extracellular. The helical transmembrane segment at 210–230 (FLLGFLLPFFIIIFCYERVAS) threads the bilayer. Residues 231–246 (KVKERSLFKSSKPFKV) are Cytoplasmic-facing. A helical membrane pass occupies residues 247–268 (MMTAIISFFVCWMPYHIHQGLL). Over 269-283 (LTTNQSLLLELTLIL) the chain is Extracellular. N272 carries an N-linked (GlcNAc...) asparagine glycan. Residues 284–303 (TVLTTSFNTIFSPTLYLFVG) traverse the membrane as a helical segment. At 304 to 333 (ENFKKVFKKSILALFESTFSEDSSVERTQT) the chain is on the cytoplasmic side.

It belongs to the G-protein coupled receptor 1 family. In terms of tissue distribution, expressed in spleen, lung, heart, liver, kidney, pancreas, thymus, gonads and leukocytes.

Its subcellular location is the cell membrane. Functionally, orphan receptor; could be a chemoattractant receptor. The sequence is that of Probable G-protein coupled receptor 33 (GPR33) from Homo sapiens (Human).